Here is a 435-residue protein sequence, read N- to C-terminus: Rho GTPase-activating protein 4 (435 aa).

Positions 1-59 (MAKVLKSSQSCHFPSPSSSSSTSCGGGNDGSNRDPHSPFNISRREEEEEEEERSEKERE) are disordered. Residues 7 to 23 (SSQSCHFPSPSSSSSTS) show a composition bias toward low complexity. Positions 93–106 (IGVPTDVRHVAHVT) constitute a CRIB domain. A Rho-GAP domain is found at 138 to 319 (VSTESMQLSY…LIVKTLKDRK (182 aa)). Positions 321 to 343 (SRDKLVPASNPSPRDHNGDQSSS) are disordered.

Acts as a GTPase activator for the Rac-type GTPase by converting it to an inactive GDP-bound state. Acts as a negative feedback regulator in tolerance to oxygen deprivation which requires ARAC4/ROP2. This is Rho GTPase-activating protein 4 (ROPGAP4) from Arabidopsis thaliana (Mouse-ear cress).